The chain runs to 244 residues: Tabinhibitin 8 (244 aa).

The N-terminal stretch at 1–23 is a signal peptide; it reads MTSILVSRFKISALTLQYATSDS. Residues 67–194 enclose the SCP domain; the sequence is YTGGGIIVLR…KTPLFFSSNC (128 aa). The short motif at 143–145 is the Cell attachment site element; sequence RGD.

It belongs to the CRISP family. Expressed in salivary glands.

The protein localises to the secreted. Its function is as follows. Inhibits platelet aggregation induced by all agonists tested (ADP, arachidonic acid, the thromboxane A2 analog U46619, thrombin, and snake venom snaclecs (TMVA that activates platelet through GPIB, and stejnulxin that specifically acts through GPVI (GP6))). May act by competing with fibrinogen for binding to glycoprotein IIb/IIIa (ITGA2B/ITGB3). The chain is Tabinhibitin 8 from Tabanus yao (Horsefly).